The following is a 366-amino-acid chain: Neutral protease 2 homolog MGYG_04094 (366 aa).

The N-terminal stretch at 1 to 19 (MQILAALSAIGALVATATA) is a signal peptide. A propeptide spanning residues 20 to 188 (AAVPNAPAKQ…NKSRSTIDKR (169 aa)) is cleaved from the precursor. Cystine bridges form between cysteine 196-cysteine 267 and cysteine 274-cysteine 292. Histidine 317 provides a ligand contact to Zn(2+). The active site involves glutamate 318. 2 residues coordinate Zn(2+): histidine 321 and aspartate 332.

Belongs to the peptidase M35 family. The cofactor is Zn(2+).

Its subcellular location is the secreted. It catalyses the reaction Preferential cleavage of bonds with hydrophobic residues in P1'. Also 3-Asn-|-Gln-4 and 8-Gly-|-Ser-9 bonds in insulin B chain.. Functionally, secreted metalloproteinase that allows assimilation of proteinaceous substrates. Shows high activities on basic nuclear substrates such as histone and protamine. May be involved in virulence. The chain is Neutral protease 2 homolog MGYG_04094 from Arthroderma gypseum (strain ATCC MYA-4604 / CBS 118893) (Microsporum gypseum).